We begin with the raw amino-acid sequence, 370 residues long: uncharacterized protein (370 aa).

Belongs to the metallo-dependent hydrolases superfamily.

This is an uncharacterized protein from Mycobacterium bovis (strain ATCC BAA-935 / AF2122/97).